Here is a 425-residue protein sequence, read N- to C-terminus: Metalloprotease AF_0655 (425 aa).

It belongs to the peptidase U62 family.

Its function is as follows. Probable metalloprotease. This Archaeoglobus fulgidus (strain ATCC 49558 / DSM 4304 / JCM 9628 / NBRC 100126 / VC-16) protein is Metalloprotease AF_0655.